The primary structure comprises 60 residues: MTTQQTVKIQLVRSPIGTKESHRATVRGLGLRKLNSVSQLQDTPEVRGMINKISYLLKVL.

The protein belongs to the universal ribosomal protein uL30 family. Part of the 50S ribosomal subunit.

This is Large ribosomal subunit protein uL30 from Verminephrobacter eiseniae (strain EF01-2).